We begin with the raw amino-acid sequence, 84 residues long: Small ribosomal subunit protein uS17 (84 aa).

The protein belongs to the universal ribosomal protein uS17 family. As to quaternary structure, part of the 30S ribosomal subunit.

One of the primary rRNA binding proteins, it binds specifically to the 5'-end of 16S ribosomal RNA. This is Small ribosomal subunit protein uS17 from Thermoanaerobacter pseudethanolicus (strain ATCC 33223 / 39E) (Clostridium thermohydrosulfuricum).